The primary structure comprises 467 residues: MLSDELESKPELLVQFVQNTSIPLGQGLVESEAKDITCLSLLPVTEASECSRLMLPDDTPNHTNSSKEVPSSAVLRSLQVNVGPDGEETRAQTVQKSPEFLSTPESPSLLQDLQPSDSTSFILLNLTRAGLGSSAEHLVFVQDEADDSGNDFLSSESTDSSIPWFLRVQELAHDSLIAATRAQLAKNAKTSSNGENVHLGSGDGQPKDSGPLPQMEKKLKCTVEGCDRTFVWPAHFKYHLKTHRNDRSFICPAAGCGKSFYVLQRLKVHMRTHNGEKPFVCPESNCGKQFTTAGNLKNHLRIHTGEKPFLCEAQGCGRSFAEYSSLRKHLVVHSGEKPHQCQVCGKTFSQSGSRNVHMRKHHLQMGAAGSQEQEPAAEPLMGSSLLEEASVTSKNLVSMNSQPSLGGESLNLPNTNSILGVDDEVLAEGSPRPLSSVPDVTHHLVTMQSGRQSYELLNQGDLTERRT.

2 disordered regions span residues 84–111 and 187–214; these read PDGEETRAQTVQKSPEFLSTPESPSLLQ and NAKTSSNGENVHLGSGDGQPKDSGPLPQ. C2H2-type zinc fingers lie at residues 219–243, 249–273, 279–303, 309–333, and 339–362; these read LKCTVEGCDRTFVWPAHFKYHLKTH, FICPAAGCGKSFYVLQRLKVHMRTH, FVCPESNCGKQFTTAGNLKNHLRIH, FLCEAQGCGRSFAEYSSLRKHLVVH, and HQCQVCGKTFSQSGSRNVHMRKHH. The Zn(2+) site is built by Cys-221, Cys-226, His-239, His-243, Cys-251, Cys-256, His-269, His-273, Cys-281, Cys-286, His-299, His-303, Cys-311, Cys-316, His-329, His-333, Cys-341, Cys-344, His-357, and His-361.

As to quaternary structure, interacts with CDKN2A/p14ARF. Post-translationally, O-glycosylated. O-GlcNAcylation may occur in response to increasing glucose levels and affect transcription factor activity. Sumoylated. Sumoylation increases its half-life, possibly by blocking ubiquitin-mediated degradation.

The protein resides in the nucleus. It is found in the chromosome. In terms of biological role, transcription factor that binds to the sequence motif 5'-CATCCCATAATA-3', and is specifically required to silence expression of fetal hemoglobin in adult erythroid cells. Prevents expression of fetal hemoglobin genes HBG1 and HBG2 through CHD4: acts as a direct transcriptional activator of CHD4, a central component of the NuRD complex that represses transcription of fetal hemoglobin genes HBG1 and HBG2 in erythroid cells. May also activate transcription of matrix-remodeling genes such as MMP1 during fibroblast senescence. May activate transcription of the gap junction gene GJC1, perhaps in response to increasing glucose. However, recent studies suggest that ZNF410 is dedicated to regulate expression of a single gene: CHD4. In Bos taurus (Bovine), this protein is Zinc finger protein 410.